The chain runs to 554 residues: 3-(3-hydroxy-phenyl)propionate/3-hydroxycinnamic acid hydroxylase (554 aa).

FAD-binding positions include 17–46 (QVAIAGAGPVGLMMANYLGQMGIDVLVVEK) and 285–295 (FRIDRVLLAGD).

Belongs to the PheA/TfdB FAD monooxygenase family. Requires FAD as cofactor.

The enzyme catalyses 3-(3-hydroxyphenyl)propanoate + NADH + O2 + H(+) = 3-(2,3-dihydroxyphenyl)propanoate + NAD(+) + H2O. The catalysed reaction is (2E)-3-(3-hydroxyphenyl)prop-2-enoate + NADH + O2 + H(+) = (2E)-3-(2,3-dihydroxyphenyl)prop-2-enoate + NAD(+) + H2O. It functions in the pathway aromatic compound metabolism; 3-phenylpropanoate degradation. Catalyzes the insertion of one atom of molecular oxygen into position 2 of the phenyl ring of 3-(3-hydroxyphenyl)propionate (3-HPP) and hydroxycinnamic acid (3HCI). This Escherichia coli O81 (strain ED1a) protein is 3-(3-hydroxy-phenyl)propionate/3-hydroxycinnamic acid hydroxylase.